The primary structure comprises 131 residues: Protein TAP2 (131 aa).

A signal peptide spans 1–22 (MAKSSPTYTVLFLLGLLALSTA). A disordered region spans residues 75–101 (ARSGGETDVKKMEGSMPDQGKTAGRDQ).

Tapetum of anthers.

This is Protein TAP2 (TAP2) from Antirrhinum majus (Garden snapdragon).